A 68-amino-acid chain; its full sequence is Molybdenum-pterin-binding protein 2 (68 aa).

The Mop domain occupies 2–68 (SISARNQLKG…VKSTDVMILA (67 aa)).

Its function is as follows. Binds one mole of molybdenum per mole of protein and contains a pterin. The chain is Molybdenum-pterin-binding protein 2 (mopII) from Clostridium pasteurianum.